The chain runs to 50 residues: Large ribosomal subunit protein bL32 (50 aa).

Basic residues predominate over residues 1–26 (MAVPKRRVSHTRSAKRRTHYKITLKK). The disordered stretch occupies residues 1–50 (MAVPKRRVSHTRSAKRRTHYKITLKKPVKDSDGSWKMPHMVNPNTGEYKN).

It belongs to the bacterial ribosomal protein bL32 family.

The chain is Large ribosomal subunit protein bL32 from Aliarcobacter butzleri (strain RM4018) (Arcobacter butzleri).